The chain runs to 1859 residues: MNLNFSLACETQASSFYGGFRPFIKYPSLQHSPGSVKEGDNKGANRSLKKATPWLRVSLERPYKYRTTLNARPVFFNRCFDKGRFKSLILWCILNFGEQKTVELVEQLKDIGYHQATLAGVSLGIDDLKIPNSKAQLVAEAQLENQLILQEDLRGNVTSIEKFQRLIDTWHLTSETLKDNVIKAFRNTDILNPVYMMAFSGARGNVSQVRQLVGMRGLMADPQGQIINFPIQSNFREGLTLTEYVISCYGARKGVVDTALRTATSGYLTRRLVDVAQHVIVYQFDCQTTRGILLNTIKVGNTTSISLQKRLVGRVSAEDIYNSKTNTKEVSRNQEITPILAEQISQNHNQVLVRSALTCQAKHGVCQLCYGWSLAQGSLVSLGEAVGVVAAQSIGEPGTQLTMRTFHTGGVFSGDVMEQIQAPHNGIVEFQTALQGTLIRTSHGKIAFLTYTKGELTLKNTTKAQRGLNHHLSSSLTQTVVGETKIIFPSYTILYVRNGEAVKHKQFIAEYSSLVGENQSIKSSQKVNAEMTGEVFFENVFLRVESSEESEKTYRSFKFSDIWILSCVTNTLKFKSNFSLTKPGDRINTATVINQVLLKKTDEGVATQQQSKKALSLPLNTSMEVLGEANKVDFSSKKTCKGLLQTDYKNLGYFYSFQNKLTKKAKSFDHSTSHLSRKGTVSLVQKNNTKSVNELFFKYGKPNLSGGSDLFKGSTSKGSPEGATGSLPVSSLNKDPFVTWYSSLFKAKYSGFYTPSTAPFTDTRMSQPAFRLAKKTANKKPPTLPCKYWGKGSFLLRNLSEVELFSNRNPGVFKRLESMTGLLSQQVYQDCYANQKILLTPFSPNTLQHSSPNTPKGVLRDGKSVVGRSNPPQHFHGSVGGGCPSKQVSAGPKKGLRAKHSEACFAIDFGETKTKTITKGRYVSQLNCKKEKRLLAKTSRMFSTLKVEFWLFENLTLSLVTHQHFPQYSYRSVEGPPTGMLGLWLLNNSFVLKQLVTNLETVASVGLPFGVVLNQNTNQNLNGSELLSQSLLNSSKKVEGPGRSASSGVLRAGSVGVDWLYFSSANTYLGKVSSGFENNKTQLIKSGQGVKQNFDQSLISQETILLASALKQLSNKQKTWPSLAFYNTLTFKNNNELGQSQLFNTGELDNNASNKSSVFSTGKSLLCHNPVLSKICNTTTFITPFNIKDRGVAPTELQLKQENKCIATQSSFLCNPTNLTPKVFLTTNYPGKVACSCVGGDVGKDTFVKVNLSQFDFIESNQSRFVPTLSFTSTLNRVNAVQQISLTKPHIYQKFFLSAQRGSYHLKTKKTLQGSPGLSYSGISNYSVSHHRSKKAESHTLPLRLNYAVKKVSRVDEERIPLRKKPKTDITKVFSIPELDWNVKLRLPSINSPETQGKNKAGVSYLVKLDLGVQRPQTAVSGRVDIFQRGLGDSEKALGFKGVAPHSSEKLNVPVFNQTNIFGLADSDASVKAGAVFETSKYTGEILKSIESKQQRLFNTPLGVVEKGLQLQNGQTHLSQLETKTIPSSLSPDSTQISPTQRVLTSDDQKTFNVLGKKPLVKVGDFVRYGDFLTCDKKISVSEPGLVIKITSSKITIRIAKPVLVSSGGVFHVQHGDFIEENAPLVTLTYTRLKTGDIVQGIPKIEELFEARISGTLHNQLAIIFENYKQKFSSAYAARKSLERIQQIIVENVLNVYQSQGVTIADKHVEIIVRQMTSKVRILESGRSGLLRGELVTLESVENANKSIHGQKAEYAPVLVGITKAALDIDKSFISAASFQETTRILSRAAIERKTDFLRGLKENVILGQLIPAGTGFSVSFSPEDPNHSKKVVKLVNQYLFSSDNLTSSTFSHMSRSSH.

Cys-286, Cys-359, Cys-366, and Cys-369 together coordinate Zn(2+).

The protein belongs to the RNA polymerase beta' chain family. RpoC2 subfamily. In plastids the minimal PEP RNA polymerase catalytic core is composed of four subunits: alpha, beta, beta', and beta''. When a (nuclear-encoded) sigma factor is associated with the core the holoenzyme is formed, which can initiate transcription. The cofactor is Zn(2+).

The protein localises to the plastid. The protein resides in the chloroplast. It catalyses the reaction RNA(n) + a ribonucleoside 5'-triphosphate = RNA(n+1) + diphosphate. Functionally, DNA-dependent RNA polymerase catalyzes the transcription of DNA into RNA using the four ribonucleoside triphosphates as substrates. In Oltmannsiellopsis viridis (Marine flagellate), this protein is DNA-directed RNA polymerase subunit beta''.